The chain runs to 469 residues: Rubisco accumulation factor 1, chloroplastic (469 aa).

A chloroplast-targeting transit peptide spans 1–46 (MLSLSHPHPHPASTTAAAAARHHHRRNAPFAPHHRRRRRFAHLTTS). Residues 1–78 (MLSLSHPHPH…TPPPTAPPDQ (78 aa)) are disordered. Basic residues predominate over residues 20–41 (ARHHHRRNAPFAPHHRRRRRFA). The segment at 90–281 (LPDKYKDLDL…PARARVEAEL (192 aa)) is N-terminal alpha-helix. The stretch at 246-294 (RQSREAIDAEDSVAELERALEVVDTEPARARVEAELDRARRKAAGEEVD) forms a coiled coil. The segment at 311–456 (VPVVRLMYGE…AEVLVVVRPP (146 aa)) is C-terminal beta sheet.

It belongs to the RAF family.

It localises to the plastid. The protein localises to the chloroplast. Required for assembly or stability of RuBisCO. Acts at a postchaperonin step to fold and/or assemble the large subunit (LS) into RuBisCO. This is Rubisco accumulation factor 1, chloroplastic (RAF1) from Oryza sativa subsp. japonica (Rice).